Here is a 207-residue protein sequence, read N- to C-terminus: Protein DMP1 (207 aa).

Residues 1–20 (MSETSLLIPKTNSPASSENM) are disordered. The next 4 membrane-spanning stretches (helical) occupy residues 33–53 (LIKLLPTGTLFIYLLLNPVLT), 64–84 (VMSSILVALCSFSCVFSCFTD), 121–141 (IADFVHAGFVLAVFGTLVLLD), and 159–179 (LVMALPPAVGVASATIFALFP).

This sequence belongs to the plant DMP1 protein family. Expressed in leaves, siliques and roots.

The protein localises to the endoplasmic reticulum membrane. The protein resides in the vacuole membrane. Functionally, involved in membrane remodeling including fission during breakdown of the endoplasmic reticulum (ER) and the tonoplast during leaf senescence and in membrane fusion during vacuole biogenesis in roots. The protein is Protein DMP1 of Arabidopsis thaliana (Mouse-ear cress).